We begin with the raw amino-acid sequence, 440 residues long: UDP-N-acetylglucosamine 1-carboxyvinyltransferase 1 (440 aa).

Phosphoenolpyruvate is bound at residue 22 to 23 (KN). Arg-93 provides a ligand contact to UDP-N-acetyl-alpha-D-glucosamine. Cys-117 functions as the Proton donor in the catalytic mechanism. A 2-(S-cysteinyl)pyruvic acid O-phosphothioketal modification is found at Cys-117. Residues 122-126 (RPIDQ), Asp-306, and Val-328 contribute to the UDP-N-acetyl-alpha-D-glucosamine site.

It belongs to the EPSP synthase family. MurA subfamily.

The protein localises to the cytoplasm. It catalyses the reaction phosphoenolpyruvate + UDP-N-acetyl-alpha-D-glucosamine = UDP-N-acetyl-3-O-(1-carboxyvinyl)-alpha-D-glucosamine + phosphate. It participates in cell wall biogenesis; peptidoglycan biosynthesis. In terms of biological role, cell wall formation. Adds enolpyruvyl to UDP-N-acetylglucosamine. This chain is UDP-N-acetylglucosamine 1-carboxyvinyltransferase 1, found in Halalkalibacterium halodurans (strain ATCC BAA-125 / DSM 18197 / FERM 7344 / JCM 9153 / C-125) (Bacillus halodurans).